Here is a 299-residue protein sequence, read N- to C-terminus: Large ribosomal subunit protein uL29m (299 aa).

It belongs to the universal ribosomal protein uL29 family. In terms of assembly, component of the mitochondrial large ribosomal subunit. Mature mitochondrial ribosomes consist of a small (37S) and a large (54S) subunit. The 37S subunit contains at least 33 different proteins and 1 molecule of RNA (15S). The 54S subunit contains at least 45 different proteins and 1 molecule of RNA (21S).

It is found in the mitochondrion. The sequence is that of Large ribosomal subunit protein uL29m (MRPL4) from Scheffersomyces stipitis (strain ATCC 58785 / CBS 6054 / NBRC 10063 / NRRL Y-11545) (Yeast).